The primary structure comprises 767 residues: Integrin beta-8 (767 aa).

Positions Met1–Arg21 are cleaved as a signal peptide. Topologically, residues Gly22–Leu681 are extracellular. Residues Arg46–Pro95 form the PSI domain. 25 cysteine pairs are disulfide-bonded: Cys47–Cys65, Cys55–Cys469, Cys58–Cys83, Cys68–Cys94, Cys211–Cys218, Cys266–Cys307, Cys407–Cys419, Cys439–Cys467, Cys471–Cys490, Cys471–Cys493, Cys481–Cys493, Cys498–Cys527, Cys510–Cys525, Cys519–Cys530, Cys532–Cys545, Cys552–Cys566, Cys560–Cys571, Cys573–Cys582, Cys584–Cys608, Cys592–Cys606, Cys600–Cys611, Cys613–Cys623, Cys626–Cys629, Cys633–Cys660, and Cys639–Cys656. One can recognise a VWFA domain in the interval Pro146–Ile384. Mg(2+) is bound by residues Asp154 and Ser156. Asp193 provides a ligand contact to Ca(2+). An N-linked (GlcNAc...) asparagine glycan is attached at Asn233. Ca(2+) is bound by residues Asn249, Asp251, Pro253, and Glu254. Residue Glu254 coordinates Mg(2+). Asn402 is a glycosylation site (N-linked (GlcNAc...) asparagine). N-linked (GlcNAc...) asparagine glycosylation is found at Asn421, Asn431, and Asn456. I-EGF domains lie at Cys471 to Asp494, Cys498 to Glu546, Lys547 to Gln583, and Cys584 to Glu624. Residue Asn647 is glycosylated (N-linked (GlcNAc...) asparagine). Residues Arg682–Ile702 traverse the membrane as a helical segment. Topologically, residues Arg703 to Phe767 are cytoplasmic.

This sequence belongs to the integrin beta chain family. As to quaternary structure, heterodimer of an alpha and a beta subunit. Beta-8 (ITGB8) associates with alpha-V (ITGAV) to form ITGAV:ITGB8. ITGAV:ITGB8 interacts with TGFB1.

It is found in the cell membrane. In terms of biological role, integrin alpha-V:beta-8 (ITGAV:ITGB8) is a receptor for fibronectin. It recognizes the sequence R-G-D in its ligands. Integrin alpha-V:beta-6 (ITGAV:ITGB6) mediates R-G-D-dependent release of transforming growth factor beta-1 (TGF-beta-1) from regulatory Latency-associated peptide (LAP), thereby playing a key role in TGF-beta-1 activation on the surface of activated regulatory T-cells (Tregs). Required during vasculogenesis. The sequence is that of Integrin beta-8 from Mus musculus (Mouse).